We begin with the raw amino-acid sequence, 41 residues long: Photosystem I reaction center subunit IX (41 aa).

The chain crosses the membrane as a helical span at residues 7-27 (YLSTAPVLATLWFGLLAGILI).

The protein belongs to the PsaJ family.

Its subcellular location is the plastid. The protein localises to the chloroplast thylakoid membrane. Its function is as follows. May help in the organization of the PsaE and PsaF subunits. This Chara vulgaris (Common stonewort) protein is Photosystem I reaction center subunit IX.